A 106-amino-acid polypeptide reads, in one-letter code: Large ribosomal subunit protein uL24 (106 aa).

Belongs to the universal ribosomal protein uL24 family. As to quaternary structure, part of the 50S ribosomal subunit.

In terms of biological role, one of two assembly initiator proteins, it binds directly to the 5'-end of the 23S rRNA, where it nucleates assembly of the 50S subunit. Its function is as follows. One of the proteins that surrounds the polypeptide exit tunnel on the outside of the subunit. The sequence is that of Large ribosomal subunit protein uL24 from Desulforudis audaxviator (strain MP104C).